Reading from the N-terminus, the 152-residue chain is MSAIVDLQVASDAANLPSADDFQRWLNAVLAHQQLSEHELTVRIVETQESQELNLTYRGKDKPTNVLSFPFEAPPGLSLNLLGDLVVCADVVAHEADEQHKKLHHHWAHMIVHGALHLLGFDHINDDEAKEMEALEVDILKQFSIDDPYQDQ.

The Zn(2+) site is built by His113, His117, and His123.

This sequence belongs to the endoribonuclease YbeY family. Requires Zn(2+) as cofactor.

Its subcellular location is the cytoplasm. Its function is as follows. Single strand-specific metallo-endoribonuclease involved in late-stage 70S ribosome quality control and in maturation of the 3' terminus of the 16S rRNA. This Pseudoalteromonas atlantica (strain T6c / ATCC BAA-1087) protein is Endoribonuclease YbeY.